Here is a 614-residue protein sequence, read N- to C-terminus: Autophagy-related protein 22-1 (614 aa).

The segment at 1–29 (MQNCTNSPEDQAASVCPPPPQFPGDDTRP) is disordered. Asparagine 3 is a glycosylation site (N-linked (GlcNAc...) asparagine). Helical transmembrane passes span 41–61 (YGWA…PITL), 126–146 (TASF…ILII), 160–180 (MLLV…LAVV), and 185–205 (LLGG…FVLL). The segment at 229 to 254 (PTGTSHDSTSTADGPGQTDGTETTSL) is disordered. Positions 230–254 (TGTSHDSTSTADGPGQTDGTETTSL) are enriched in polar residues. Helical transmembrane passes span 291 to 311 (GIGI…LVVV), 322 to 342 (LVLF…AMWL), 383 to 403 (ILLF…VSGT), 417 to 437 (AALG…AFSW), 452 to 472 (IVAC…GFIP), 486 to 506 (WEMY…SSYC), 523 to 545 (YALY…GIIT), and 554 to 574 (AFVF…LVDV).

It belongs to the ATG22 family.

It localises to the vacuole membrane. Its function is as follows. Vacuolar effluxer which mediate the efflux of amino acids resulting from autophagic degradation. The release of autophagic amino acids allows the maintenance of protein synthesis and viability during nitrogen starvation. The polypeptide is Autophagy-related protein 22-1 (atg22-1) (Aspergillus niger (strain ATCC MYA-4892 / CBS 513.88 / FGSC A1513)).